A 361-amino-acid polypeptide reads, in one-letter code: Mitogen-activated protein kinase 14B (361 aa).

The region spanning 25–309 is the Protein kinase domain; the sequence is YQNLSPVGSG…ASQALAHPYF (285 aa). ATP contacts are provided by residues 31–39 and lysine 54; that span reads VGSGAYGSV. Catalysis depends on aspartate 151, which acts as the Proton acceptor. The residue at position 181 (threonine 181) is a Phosphothreonine; by MAP2K6. Positions 181–183 match the TXY motif; it reads TGY. The residue at position 183 (tyrosine 183) is a Phosphotyrosine; by MAP2K6.

This sequence belongs to the protein kinase superfamily. CMGC Ser/Thr protein kinase family. MAP kinase subfamily. The cofactor is Mg(2+). In terms of processing, dually phosphorylated on Thr-181 and Tyr-183, which activates the enzyme. Predominantly expressed in the ovary. Lower levels present in brain, gill, heart, spleen, kidney, muscle and gut.

The protein localises to the cytoplasm. The protein resides in the nucleus. The enzyme catalyses L-seryl-[protein] + ATP = O-phospho-L-seryl-[protein] + ADP + H(+). It catalyses the reaction L-threonyl-[protein] + ATP = O-phospho-L-threonyl-[protein] + ADP + H(+). With respect to regulation, activated by threonine and tyrosine phosphorylation by the dual specificity kinase, MKK6. Functionally, serine/threonine kinase which acts as an essential component of the MAP kinase signal transduction pathway. Mapk14b is one of the four p38 MAPKs which play an important role in the cascades of cellular responses evoked by extracellular stimuli such as pro-inflammatory cytokines or physical stress leading to direct activation of transcription factors. Accordingly, p38 MAPKs phosphorylate a broad range of proteins and it has been estimated that they may have approximately 200 to 300 substrates each. Some of the targets are downstream kinases which are activated through phosphorylation and further phosphorylate additional targets. The protein is Mitogen-activated protein kinase 14B (mapk14b) of Cyprinus carpio (Common carp).